Reading from the N-terminus, the 515-residue chain is Vacuolar segregation protein PEP7 (515 aa).

Residues 6-29 form a C2H2-type zinc finger; the sequence is VSCPICLRKFDNLQALNAHLDVEH. Positions 36–58 are disordered; sequence DSLGSNDSRLVNGKQKKARSVDS. The FYVE-type 1; atypical zinc-finger motif lies at 72-137; that stretch reads KKGKSCCHTC…CCHDCFVTKP (66 aa). Residues cysteine 78, cysteine 81, cysteine 94, cysteine 97, cysteine 102, histidine 105, cysteine 129, cysteine 132, cysteine 221, cysteine 224, cysteine 237, cysteine 240, cysteine 245, cysteine 252, cysteine 289, and cysteine 292 each contribute to the Zn(2+) site. Residues 215–297 form an FYVE-type 2 zinc finger; that stretch reads DRSVLFCNIC…LCSHCIDMLF (83 aa).

In terms of assembly, interacts with VPS21, VPS45, PEP3 and PEP5.

The protein localises to the vacuole membrane. In terms of biological role, required for vacuole segregation and vacuole protein sorting. Possibly part of a complex which tethers the vacuole membrane to microtubules, either directly or via kinesin or dynein-like motor proteins. Probably functions in several interorganelle traffic pathways. This Saccharomyces cerevisiae (strain ATCC 204508 / S288c) (Baker's yeast) protein is Vacuolar segregation protein PEP7 (PEP7).